The sequence spans 449 residues: Allantoinase (449 aa).

Residues H61, H63, K148, H184, H240, and D313 each coordinate Zn(2+). Position 148 is an N6-carboxylysine (K148).

It belongs to the metallo-dependent hydrolases superfamily. Allantoinase family. As to quaternary structure, homotetramer. Zn(2+) is required as a cofactor. Carboxylation allows a single lysine to coordinate two zinc ions.

The enzyme catalyses (S)-allantoin + H2O = allantoate + H(+). It functions in the pathway nitrogen metabolism; (S)-allantoin degradation; allantoate from (S)-allantoin: step 1/1. In terms of biological role, catalyzes the conversion of allantoin (5-ureidohydantoin) to allantoic acid by hydrolytic cleavage of the five-member hydantoin ring. In Desulfitobacterium hafniense (strain Y51), this protein is Allantoinase.